The following is a 523-amino-acid chain: Synaptotagmin-10 (523 aa).

The Vesicular portion of the chain corresponds to Met-1 to Ser-55. The cysteine motif stretch occupies residues Cys-13 to Ser-35. A helical transmembrane segment spans residues Leu-56 to Phe-76. Residues Trp-77–Pro-523 are Cytoplasmic-facing. At Thr-136 the chain carries Phosphothreonine. C2 domains are found at residues Ile-231–Lys-352 and Asp-363–His-496. 11 residues coordinate Ca(2+): Asp-262, Asp-268, Asp-320, Phe-321, Asp-322, Ser-325, Asp-328, Asp-394, Asp-400, Asp-454, and Asp-456.

It belongs to the synaptotagmin family. Homodimer; disulfide-linked via the cysteine motif. Can also form heterodimers with SYT3, SYT6, SYT7 and SYT9. The cofactor is Ca(2+).

Its subcellular location is the cytoplasmic vesicle. It is found in the secretory vesicle membrane. Its function is as follows. Ca(2+) sensor specifically required for the Ca(2+)-dependent exocytosis of secretory vesicles containing IGF1 in neurons of the olfactory bulb. Exocytosis of IGF1 is required for sensory perception of smell. Not involved in Ca(2+)-dependent synaptic vesicle exocytosis. Acts through Ca(2+) and phospholipid binding to the C2 domain: Ca(2+) induces binding of the C2-domains to phospholipid membranes and to assembled SNARE-complexes; both actions contribute to triggering exocytosis. This Pongo abelii (Sumatran orangutan) protein is Synaptotagmin-10 (SYT10).